Consider the following 953-residue polypeptide: MSKKRLHEIAKEIGKSSKEVVEHAKYLGLDVKSHASSVEEADAKKIISSFSKASKPDVTASQTVKPKEVAQPSVTVVKETGSEHVEKTQVSKPKSRNFKAEREARAKEQAARKQANGSSHRSQERRGGYRQPNNHQTNEQGDKRITHRSQGDTNDKRIERKASNVSPRHDNHQLVGDRNRSFAKENHKNGRFTNQKKQGRQEPQSKSPKIDFKARAAALKAEQNAEYSRQSETRFRAQQEAKRLAELARQEAKEAALKAQAEEMSHREAALKSIEEAETKLKSSNISAKSTADNRRKKQARPEKNRELTHHSQEGQKKNKKSWNSQNQVRNQKNSNWNKNKKTKKGKNAKNTNTAPKPVTERKFHELPKEFEYTEGMTVAEIAKRIKREPAEIVKKLFMMGVMATQNQSLDGDTIELLMVDYGIEAKAKVEVDDADIERFFEDENYLNPENIVERAPVVTIMGHVDHGKTTLLDTLRNSRVATGEAGGITQHIGAYQIEEAGKKITFLDTPGHAAFTSMRARGASVTDITILIVAADDGVMPQTIEAINHSKAAGVPIIVAINKIDKPGANPERVIAELAEYGIISTAWGGECEFVEISAKFNKNIDELLETVLLVAEVEELKADPTVRAIGTVIEARLDKGKGAIATLLVQQGTLHVQDPIVVGNTFGRVRAMVNDLGRRVKSAEPSTPVSITGLNETPMAGDHFAVYADEKAARAAGEERSKRALLKQRQNTQRVSLDNLFDTLKAGEIKTVNVIIKADVQGSVEALAASLVKIEVEGVRVNVVHSAVGAINESDVTLAEASNAVIIGFNVRPTPQARQQADTDDVEIRLHSIIYKVIEEVEEAMKGKLDPVYQEKILGEAIIRETFKVSKVGTIGGFMVINGKVTRDSSVRVIRDSVVIFDGKLASLKHYKDDVKEVGNAQEGGLMIENFNDLKVDDTIEAYIMEEIVRK.

2 disordered regions span residues 48-212 (SSFS…KIDF) and 279-367 (TKLK…FHEL). Basic and acidic residues-rich tracts occupy residues 80–89 (TGSEHVEKTQ), 98–111 (FKAE…EQAA), and 140–188 (QGDK…ENHK). Polar residues-rich tracts occupy residues 191–207 (RFTN…QSKS) and 282–291 (KSSNISAKST). Basic and acidic residues predominate over residues 300 to 317 (ARPEKNRELTHHSQEGQK). Positions 322-338 (SWNSQNQVRNQKNSNWN) are enriched in low complexity. Residues 339–348 (KNKKTKKGKN) are compositionally biased toward basic residues. Positions 454–623 (ERAPVVTIMG…LLVAEVEELK (170 aa)) constitute a tr-type G domain. The segment at 463–470 (GHVDHGKT) is G1. 463 to 470 (GHVDHGKT) is a binding site for GTP. The G2 stretch occupies residues 488-492 (GITQH). The tract at residues 509-512 (DTPG) is G3. Residues 509-513 (DTPGH) and 563-566 (NKID) contribute to the GTP site. Residues 563–566 (NKID) form a G4 region. The tract at residues 599–601 (SAK) is G5.

The protein belongs to the TRAFAC class translation factor GTPase superfamily. Classic translation factor GTPase family. IF-2 subfamily.

Its subcellular location is the cytoplasm. In terms of biological role, one of the essential components for the initiation of protein synthesis. Protects formylmethionyl-tRNA from spontaneous hydrolysis and promotes its binding to the 30S ribosomal subunits. Also involved in the hydrolysis of GTP during the formation of the 70S ribosomal complex. This is Translation initiation factor IF-2 from Streptococcus pyogenes serotype M3 (strain ATCC BAA-595 / MGAS315).